Reading from the N-terminus, the 299-residue chain is ATP phosphoribosyltransferase (299 aa).

The protein belongs to the ATP phosphoribosyltransferase family. Long subfamily. Mg(2+) is required as a cofactor.

It localises to the cytoplasm. It carries out the reaction 1-(5-phospho-beta-D-ribosyl)-ATP + diphosphate = 5-phospho-alpha-D-ribose 1-diphosphate + ATP. The protein operates within amino-acid biosynthesis; L-histidine biosynthesis; L-histidine from 5-phospho-alpha-D-ribose 1-diphosphate: step 1/9. With respect to regulation, feedback inhibited by histidine. Functionally, catalyzes the condensation of ATP and 5-phosphoribose 1-diphosphate to form N'-(5'-phosphoribosyl)-ATP (PR-ATP). Has a crucial role in the pathway because the rate of histidine biosynthesis seems to be controlled primarily by regulation of HisG enzymatic activity. The polypeptide is ATP phosphoribosyltransferase (Mannheimia succiniciproducens (strain KCTC 0769BP / MBEL55E)).